Here is a 338-residue protein sequence, read N- to C-terminus: MLSERRLEVLRAIVQDYVGTEEPVGSKALTERHNLGVSPATVRNDMAALEDEGYIAQPHTSAGRIPTDRGYRLFVDKLAGVKPMTGPERRAIQNFLDGAVDLDDVVGRTVRLLAQLTRQVAVVQYPSLTRSTVRHVELLSLAPARVMLVLITDTGRVEQRMIDCPAPFGETSLADLRARLNSRVAGRRFADVPQLVQDLSEAFDPEDRGTVTTVLSTLLETLVEETEERLMIGGTANLTRFGHDFPLTIRPVLEALEEQVVLLKLLGSAGDSGMTVRIGHENAYEGLNSTSVVSVGYGSGDEAVAKLGVVGPTRMDYPGTMGAVRAVARYVGQILAES.

It belongs to the HrcA family.

Functionally, negative regulator of class I heat shock genes (grpE-dnaK-dnaJ and groELS operons). Prevents heat-shock induction of these operons. This Streptomyces avermitilis (strain ATCC 31267 / DSM 46492 / JCM 5070 / NBRC 14893 / NCIMB 12804 / NRRL 8165 / MA-4680) protein is Heat-inducible transcription repressor HrcA.